The sequence spans 279 residues: Calcium-activated potassium channel subunit beta-3 (279 aa).

The Cytoplasmic portion of the chain corresponds to Met1 to Met60. The chain crosses the membrane as a helical span at residues Leu61–Leu81. Over Lys82–Gln207 the chain is Extracellular. The N-linked (GlcNAc...) asparagine glycan is linked to Asn131. Residues Met208 to Val228 traverse the membrane as a helical segment. Over Gly229–Ser279 the chain is Cytoplasmic.

The protein belongs to the KCNMB (TC 8.A.14.1) family. KCNMB3 subfamily. In terms of assembly, interacts with KCNMA1 tetramer. There are probably 4 molecules of KCMNB3 per KCNMA1 tetramer. N-glycosylated. Post-translationally, the extracellular domain contains disulfide bond essential for the gating mechanism. As to expression, isoform 1, isoform 3 and isoform 4 are widely expressed. Isoform 2 is expressed placenta, pancreas, kidney and heart. Isoform 1 and isoform 3 are highly expressed in pancreas and testis.

Its subcellular location is the membrane. Regulatory subunit of the calcium activated potassium KCNMA1 (maxiK) channel. Modulates the calcium sensitivity and gating kinetics of KCNMA1, thereby contributing to KCNMA1 channel diversity. Alters the functional properties of the current expressed by the KCNMA1 channel. Isoform 2, isoform 3 and isoform 4 partially inactivate the current of KCNBMA. Isoform 4 induces a fast and incomplete inactivation of KCNMA1 channel that is detectable only at large depolarizations. In contrast, isoform 1 does not induce detectable inactivation of KCNMA1. Two or more subunits of KCNMB3 are required to block the KCNMA1 tetramer. In Homo sapiens (Human), this protein is Calcium-activated potassium channel subunit beta-3 (KCNMB3).